Reading from the N-terminus, the 171-residue chain is MRAFLIGRWQPFHKGHLEIIKKISKEVDEIIIGIGSCQKSHTLTDPFTAGERMMMITKTLENYDINYYAIPINDIDYNAVWVSSVESLTPPFTTVYTGNSLVRELFSEKNYAVKKPELYNRTDYSGTKIRKKMLDGSTWEHLVPEEVVKVIEEIDGINRIRRLNEKDYDEE.

This sequence belongs to the archaeal NMN adenylyltransferase family.

The protein resides in the cytoplasm. It catalyses the reaction beta-nicotinamide D-ribonucleotide + ATP + H(+) = diphosphate + NAD(+). It participates in cofactor biosynthesis; NAD(+) biosynthesis; NAD(+) from nicotinamide D-ribonucleotide: step 1/1. This chain is Nicotinamide-nucleotide adenylyltransferase, found in Methanococcus maripaludis (strain C5 / ATCC BAA-1333).